A 344-amino-acid chain; its full sequence is MGPPSAPPCRLHVPWKEVLLTASLLTFWNPPTTAKLTIESTPFNVAEGKEVLLLAHNLPQNRIGYSWYKGERVDGNSLIVGYVIGTQQATPGPAYSGRETIYPNASLLIQNVTQNDTGFYTLQVIKSDLVNEEATGQFHVYPELPKPSISSNNSNPVEDKDAVAFTCEPEVQNTTYLWWVNGQSLPVSPRLQLSNGNMTLTLLSVKRNDAGSYECEIQNPASANRSDPVTLNVLYGPDVPTISPSKANYRPGENLNLSCHAASNPPAQYSWFINGTFQQSTQELFIPNITVNNSGSYMCQAHNSATGLNRTTVTMITVSGSAPVLSAVATVGITIGVLARVALI.

Residues 1 to 34 (MGPPSAPPCRLHVPWKEVLLTASLLTFWNPPTTA) form the signal peptide. Positions 35–142 (KLTIESTPFN…EATGQFHVYP (108 aa)) constitute an Ig-like V-type domain. Asn-104, Asn-111, Asn-115, Asn-152, Asn-173, Asn-197, Asn-224, Asn-256, Asn-274, Asn-288, Asn-292, and Asn-309 each carry an N-linked (GlcNAc...) asparagine glycan. Ig-like C2-type domains are found at residues 145–232 (PKPS…VTLN) and 240–314 (PTIS…TTVT). Cys-167 and Cys-215 are disulfide-bonded. Cys-259 and Cys-299 form a disulfide bridge. Gly-320 carries GPI-anchor amidated glycine lipidation. Positions 321-344 (SAPVLSAVATVGITIGVLARVALI) are cleaved as a propeptide — removed in mature form.

It belongs to the immunoglobulin superfamily. CEA family. Homodimer; homodimerizes via its Ig-like V-type domain. Heterodimer with CEACAM8; heterodimerizes via its Ig-like V-type domain. In terms of processing, glycosylated. Expressed in neutrophils. Expressed in columnar epithelial and goblet cells of the colon. Expressed in numerous tumor cell lines (at protein level).

It localises to the cell membrane. The protein localises to the apical cell membrane. Its subcellular location is the cell surface. Its function is as follows. Cell surface glycoprotein that plays a role in cell adhesion and tumor progression. Intercellular adhesion occurs in a calcium- and fibronectin-independent manner. Mediates homophilic and heterophilic cell adhesion with other carcinoembryonic antigen-related cell adhesion molecules, such as CEACAM5 and CEACAM8. Heterophilic interaction with CEACAM8 occurs in activated neutrophils. Plays a role in neutrophil adhesion to cytokine-activated endothelial cells. Plays a role in cell migration and cell adhesion to endothelial cells. In Homo sapiens (Human), this protein is Cell adhesion molecule CEACAM6.